The following is a 100-amino-acid chain: Urease subunit gamma (100 aa).

Belongs to the urease gamma subunit family. In terms of assembly, heterotrimer of UreA (gamma), UreB (beta) and UreC (alpha) subunits. Three heterotrimers associate to form the active enzyme.

It localises to the cytoplasm. It catalyses the reaction urea + 2 H2O + H(+) = hydrogencarbonate + 2 NH4(+). It participates in nitrogen metabolism; urea degradation; CO(2) and NH(3) from urea (urease route): step 1/1. In Allorhizobium ampelinum (strain ATCC BAA-846 / DSM 112012 / S4) (Agrobacterium vitis (strain S4)), this protein is Urease subunit gamma.